A 1514-amino-acid polypeptide reads, in one-letter code: Polycomb group protein ASXL1 (1514 aa).

Residues 11 to 86 enclose the HTH HARE-type domain; that stretch reads RTWAEAARLV…RISLFTLKKD (76 aa). Disordered stretches follow at residues 95–170 and 183–249; these read ATVD…VMLP and HVEP…RGEE. The segment covering 98–107 has biased composition (acidic residues); it reads DGDEPEDSAD. Positions 111-145 are enriched in polar residues; that stretch reads CGSNEASTVSGENDVSLDETSSNASCSTESQSRPL. Positions 199–209 are enriched in low complexity; it reads SGSPSSSSSGS. The tract at residues 243 to 246 is interaction with nucleosomal DNA forming a DNA clamp with BAP1; it reads KRNR. Residues 255–364 enclose the DEUBAD domain; the sequence is PGSILVNTNL…FEDYYGQKLG (110 aa). Positions 284–288 match the LXXLL motif 1 motif; sequence LLLLL. The interval 300–655 is interaction with NCOA1; it reads LLRLSGSALN…GGGSGAIDEG (356 aa). Positions 310–315 match the NEF motif motif; it reads NEFFTH. Residues 336 to 346 are interaction with nucleosomal DNA; the sequence is RLRQEMEKEKK. Disordered regions lie at residues 378-543, 635-823, 895-914, 926-952, and 964-995; these read EEAK…EDRQ, TTAI…FDNM, SDPE…EKEW, SVPQ…SDSE, and ISEA…VDAS. Positions 408–415 match the Nuclear localization signal motif; it reads FKKRSRPD. Positions 458-473 are enriched in polar residues; that stretch reads VNSTPGPDVSSATSGQ. 2 positions are modified to phosphoserine: Ser498 and Ser500. 2 stretches are compositionally biased toward basic and acidic residues: residues 514 to 525 and 533 to 543; these read QETKDQKRKSFE and PEKKPRLEDRQ. Positions 638-654 are enriched in gly residues; the sequence is IGGGGGPGGGGSGAIDE. Positions 678-692 are enriched in polar residues; it reads PSTSGESASDLQRTQ. 2 stretches are compositionally biased toward basic and acidic residues: residues 713–728 and 779–793; these read ARRE…ESCL and LLDD…REDQ. Positions 808-812 match the LXXLL motif 2 motif; the sequence is LGDLL. Residues 971–980 are compositionally biased toward polar residues; sequence HSESTDTASD. Residues 1082-1087 form a required for interaction with RARA region; that stretch reads LVMHLL. 3 disordered regions span residues 1095 to 1131, 1213 to 1234, and 1256 to 1338; these read KVLP…ENNR, EQKE…GQCL, and SEQT…VSAD. Residues 1119 to 1129 are compositionally biased toward polar residues; that stretch reads DRGTLQGTGEN. Polar residues-rich tracts occupy residues 1256–1269 and 1313–1324; these read SEQT…QNNA and SKNSVSGGVQTT. The segment at 1476 to 1513 adopts a PHD-type; atypical zinc-finger fold; that stretch reads SLQCACSLKAMIMCQGCGAFCHDDCIGPSKLCVLCLVV.

Belongs to the Asx family. Core component of the polycomb repressive deubiquitinase (PR-DUB) complex, at least composed of BAP1, one of ASXL1, ASXL2 or (probably) ASXL3, and one of MBD5 or MBD6. Distinct combinations of ASXL and MBD proteins may preferentially bind specific histone modification marks. The PR-DUB core associates with a number of accessory proteins, including FOXK1, FOXK2, KDM1B, HCFC1 and OGT; KDM1B specifically associates with ASXL2 PR-DUB complexes. Interacts (via DEUBAD domain) with BAP1 (via ULD domain); the interaction is direct and forms a ubiquitin binding cleft. The interaction with BAP1 is important for maintaining BAP1 stability. Together with BAP1, associates (via DEUBAD domain) with nucleosomes; interacts with nucleosomal DNA and stabilizes the orientation of the nucleosome to line up the PR-DUB complex active site with its H2AK118ub1 substrate. Interacts (via PHD domain) with MBD5 and MBD6 (via MBD domain); the interaction is probably direct and mediates association of MBD proteins with the PR-DUB core. Interacts with RARA, RXRA. Interacts with NCOA1. Interacts with PPARA and PPARG. Post-translationally, ubiquitinated by TRIP12, leading to its subsequent degradation following binding of N(6)-methyladenine methylated DNA (6mA).

It localises to the nucleus. In terms of biological role, probable Polycomb group (PcG) protein involved in transcriptional regulation mediated by ligand-bound nuclear hormone receptors, such as retinoic acid receptors (RARs) and peroxisome proliferator-activated receptor gamma (PPARG). Acts as a coactivator of RARA and RXRA through association with NCOA1. Acts as a corepressor for PPARG and suppresses its adipocyte differentiation-inducing activity. Non-catalytic component of the PR-DUB complex, a complex that specifically mediates deubiquitination of histone H2A monoubiquitinated at 'Lys-119' (H2AK119ub1). Acts as a sensor of N(6)-methyladenine methylation on DNA (6mA): recognizes and binds 6mA DNA, leading to its ubiquitination and degradation by TRIP12, thereby inactivating the PR-DUB complex and regulating Polycomb silencing. The PR-DUB complex is an epigenetic regulator of gene expression and acts as a transcriptional coactivator, affecting genes involved in development, cell communication, signaling, cell proliferation and cell viability. ASXL1, ASXL2 and ASXL3 function redundantly in the PR-DUB complex. The ASXL proteins are essential for chromatin recruitment and transcriptional activation of associated genes. ASXL1 and ASXL2 are important for BAP1 protein stability. Together with BAP1, negatively regulates epithelial-mesenchymal transition (EMT) of trophoblast stem cells during placental development by regulating genes involved in epithelial cell integrity, cell adhesion and cytoskeletal organization. The chain is Polycomb group protein ASXL1 (Asxl1) from Mus musculus (Mouse).